The primary structure comprises 346 residues: 3 beta-hydroxysteroid dehydrogenase/Delta 5--&gt;4-isomerase (346 aa).

Residue Tyr147 is the Proton acceptor of the active site. Residue Lys151 participates in NAD(+) binding.

It belongs to the 3-beta-HSD family.

It catalyses the reaction a 3beta-hydroxy-Delta(5)-steroid + NAD(+) = a 3-oxo-Delta(5)-steroid + NADH + H(+). The enzyme catalyses a 3-oxo-Delta(5)-steroid = a 3-oxo-Delta(4)-steroid. Its pathway is lipid metabolism; steroid biosynthesis. In terms of biological role, catalyzes the oxidative conversion of Delta(5)-ene-3-beta-hydroxy steroid, and the oxidative conversion of ketosteroids. The 3-beta-HSD enzymatic system plays a crucial role in the biosynthesis of all classes of hormonal steroids. During viral infection, steroid production contributes to virulence by inhibiting the host inflammatory response. The sequence is that of 3 beta-hydroxysteroid dehydrogenase/Delta 5--&gt;4-isomerase (OPG174) from Homo sapiens (Human).